A 402-amino-acid chain; its full sequence is Protein FAM53A (402 aa).

S119 bears the Phosphoserine mark. Residues 170 to 215 (LVPGLPRRPVSPAGPTSPLTPRPASASSGFVDGSEGSTSSGPPWLS) form a disordered region. Positions 273–281 (RRVRRKRRR) match the Nuclear localization signal motif. Phosphoserine occurs at positions 306 and 309. The span at 323–333 (TLVSSPCNSQG) shows a compositional bias: polar residues. The disordered stretch occupies residues 323-402 (TLVSSPCNSQ…DLDLEQIENN (80 aa)). The segment covering 336–345 (GIITPSSSPR) has biased composition (low complexity).

This sequence belongs to the FAM53 family.

The protein localises to the nucleus. In terms of biological role, may play an important role in neural development; the dorsomedial roof of the third ventricle. The protein is Protein FAM53A of Mus musculus (Mouse).